A 191-amino-acid polypeptide reads, in one-letter code: Xanthine phosphoribosyltransferase (191 aa).

Residues Leu20 and Asn27 each coordinate xanthine. 128–132 lines the 5-phospho-alpha-D-ribose 1-diphosphate pocket; it reads ANGQA. Lys156 contacts xanthine.

The protein belongs to the purine/pyrimidine phosphoribosyltransferase family. Xpt subfamily. Homodimer.

Its subcellular location is the cytoplasm. It carries out the reaction XMP + diphosphate = xanthine + 5-phospho-alpha-D-ribose 1-diphosphate. The protein operates within purine metabolism; XMP biosynthesis via salvage pathway; XMP from xanthine: step 1/1. Functionally, converts the preformed base xanthine, a product of nucleic acid breakdown, to xanthosine 5'-monophosphate (XMP), so it can be reused for RNA or DNA synthesis. The sequence is that of Xanthine phosphoribosyltransferase from Limosilactobacillus reuteri (strain DSM 20016) (Lactobacillus reuteri).